Reading from the N-terminus, the 394-residue chain is Endothelial cell-selective adhesion molecule (394 aa).

The first 29 residues, M1–A29, serve as a signal peptide directing secretion. The Extracellular segment spans residues Q30–A251. In terms of domain architecture, Ig-like V-type spans P37–K146. N111, N172, N216, and N239 each carry an N-linked (GlcNAc...) asparagine glycan. The 88-residue stretch at P156 to D243 folds into the Ig-like C2-type domain. The cysteines at positions 177 and 227 are disulfide-linked. Residues V252–L272 form a helical membrane-spanning segment. Residues L273–V394 are Cytoplasmic-facing. The interval W300–S372 is disordered. Polar residues-rich tracts occupy residues G303 to S318 and F335 to S347. S304 is subject to Phosphoserine. Phosphothreonine is present on residues T336 and T338. A phosphoserine mark is found at S340, S343, and S348.

In terms of assembly, interacts with MAGI1.

The protein resides in the cell junction. The protein localises to the adherens junction. It is found in the tight junction. It localises to the cell membrane. Its function is as follows. Can mediate aggregation most likely through a homophilic molecular interaction. This chain is Endothelial cell-selective adhesion molecule (Esam), found in Rattus norvegicus (Rat).